The chain runs to 1413 residues: DNA-directed RNA polymerase subunit beta' (1413 aa).

Zn(2+)-binding residues include Cys-70, Cys-72, Cys-85, and Cys-88. Mg(2+) contacts are provided by Asp-460, Asp-462, and Asp-464. Cys-819, Cys-893, Cys-900, and Cys-903 together coordinate Zn(2+). A disordered region spans residues 1392-1413 (EEAFDFGTPSAPAEEPQHPAAE).

The protein belongs to the RNA polymerase beta' chain family. As to quaternary structure, the RNAP catalytic core consists of 2 alpha, 1 beta, 1 beta' and 1 omega subunit. When a sigma factor is associated with the core the holoenzyme is formed, which can initiate transcription. It depends on Mg(2+) as a cofactor. Requires Zn(2+) as cofactor.

The enzyme catalyses RNA(n) + a ribonucleoside 5'-triphosphate = RNA(n+1) + diphosphate. Functionally, DNA-dependent RNA polymerase catalyzes the transcription of DNA into RNA using the four ribonucleoside triphosphates as substrates. This chain is DNA-directed RNA polymerase subunit beta', found in Burkholderia cenocepacia (strain ATCC BAA-245 / DSM 16553 / LMG 16656 / NCTC 13227 / J2315 / CF5610) (Burkholderia cepacia (strain J2315)).